The chain runs to 819 residues: Plastid division protein CDP1, chloroplastic (819 aa).

The transit peptide at 1–76 (MPVAYTFPVL…NAAGGGIHVV (76 aa)) directs the protein to the chloroplast. Residues 77 to 572 (DNAPSRTSSL…NKIWDEWLSQ (496 aa)) are Stromal-facing. Residues 419 to 439 (EAEALEKLKQLESNSDSAVRN) are a coiled coil. The helical transmembrane segment at 573–593 (SSLIGRVSVVALLGCTVFFSL) threads the bilayer. At 594–819 (KLSGIRSGRL…FCQSDIQIQK (226 aa)) the chain is on the chloroplast intermembrane side. Residues 762–782 (IAGEAAEIEALLEEAAELVDE) are a coiled coil.

Self-interacts. Interacts (via N-terminus) with ARC3 (via MORN domains). Binds (via N-terminus) to FTSZ2 proteins, FTSZ2-1 and FTSZ2-2. Recruited ARC3 to the middle of the plastid where subsequent complex made of CDP1/PARC6, ARC3 and FtsZ proteins can form; this complex enhances the dynamics of Z rings during chloroplast division. Interacts (via C-terminus) with PDV1 (via C-terminus). Interacts with MIND1. In terms of tissue distribution, exclusively expressed in young green tissues such as young cotyledons, shoot apex, emerging leaves and budding inflorescence.

It localises to the plastid. The protein resides in the chloroplast inner membrane. In terms of biological role, component of the plastid division machinery required for PDV1 localization to constriction sites. Involved in chloroplast division site placement. Required for the proper formation of FtsZ rings at the division site in nongreen plastids (e.g. etioplasts). Inhibits FtsZ assembly, functioning as an antagonistic regulator of FtsZ dynamics against ARC6, by recruiting ARC3 to the middle of the plastid to facilitate its interaction with FtsZ proteins. Required during stromule biogenesis in the leaf epidermis, especially in non-mesophyll cells plastids. The polypeptide is Plastid division protein CDP1, chloroplastic (Arabidopsis thaliana (Mouse-ear cress)).